Reading from the N-terminus, the 227-residue chain is Phosphatidylserine decarboxylase proenzyme (227 aa).

S184 (schiff-base intermediate with substrate; via pyruvic acid) is an active-site residue. S184 is modified (pyruvic acid (Ser); by autocatalysis).

The protein belongs to the phosphatidylserine decarboxylase family. PSD-A subfamily. In terms of assembly, heterodimer of a large membrane-associated beta subunit and a small pyruvoyl-containing alpha subunit. Pyruvate serves as cofactor. Post-translationally, is synthesized initially as an inactive proenzyme. Formation of the active enzyme involves a self-maturation process in which the active site pyruvoyl group is generated from an internal serine residue via an autocatalytic post-translational modification. Two non-identical subunits are generated from the proenzyme in this reaction, and the pyruvate is formed at the N-terminus of the alpha chain, which is derived from the carboxyl end of the proenzyme. The post-translation cleavage follows an unusual pathway, termed non-hydrolytic serinolysis, in which the side chain hydroxyl group of the serine supplies its oxygen atom to form the C-terminus of the beta chain, while the remainder of the serine residue undergoes an oxidative deamination to produce ammonia and the pyruvoyl prosthetic group on the alpha chain.

Its subcellular location is the cell membrane. It carries out the reaction a 1,2-diacyl-sn-glycero-3-phospho-L-serine + H(+) = a 1,2-diacyl-sn-glycero-3-phosphoethanolamine + CO2. It functions in the pathway phospholipid metabolism; phosphatidylethanolamine biosynthesis; phosphatidylethanolamine from CDP-diacylglycerol: step 2/2. Catalyzes the formation of phosphatidylethanolamine (PtdEtn) from phosphatidylserine (PtdSer). The protein is Phosphatidylserine decarboxylase proenzyme of Ehrlichia ruminantium (strain Gardel).